A 354-amino-acid polypeptide reads, in one-letter code: Non-structural protein NS2 (354 aa).

2 disordered regions span residues 163–196 and 229–269; these read NERE…DNEA and DERD…THIT. Basic and acidic residues-rich tracts occupy residues 178–196 and 237–249; these read SREE…DNEA and DERG…KTLS. Positions 250-260 are enriched in acidic residues; sequence DDDDQGEDASD.

Its function is as follows. Single-stranded RNA-binding protein. This Bluetongue virus 17 (isolate USA) (BTV 17) protein is Non-structural protein NS2 (Segment-8).